Reading from the N-terminus, the 565-residue chain is Oxygen-dependent choline dehydrogenase (565 aa).

Residue 6–35 (DYIIVGAGSAGNTLATRLTEDAGVTVLLLE) coordinates FAD. The active-site Proton acceptor is the His475.

The protein belongs to the GMC oxidoreductase family. FAD is required as a cofactor.

It carries out the reaction choline + A = betaine aldehyde + AH2. It catalyses the reaction betaine aldehyde + NAD(+) + H2O = glycine betaine + NADH + 2 H(+). It functions in the pathway amine and polyamine biosynthesis; betaine biosynthesis via choline pathway; betaine aldehyde from choline (cytochrome c reductase route): step 1/1. Functionally, involved in the biosynthesis of the osmoprotectant glycine betaine. Catalyzes the oxidation of choline to betaine aldehyde and betaine aldehyde to glycine betaine at the same rate. The chain is Oxygen-dependent choline dehydrogenase from Pseudomonas putida (strain ATCC 700007 / DSM 6899 / JCM 31910 / BCRC 17059 / LMG 24140 / F1).